The following is a 115-amino-acid chain: NADH-ubiquinone oxidoreductase chain 3 (115 aa).

The next 3 membrane-spanning stretches (helical) occupy residues 4–24 (LLTM…AFWL), 55–75 (FFLV…LLPI), and 84–104 (INTM…GLAY).

It belongs to the complex I subunit 3 family. Core subunit of respiratory chain NADH dehydrogenase (Complex I) which is composed of 45 different subunits. Interacts with TMEM186. Interacts with TMEM242.

The protein localises to the mitochondrion inner membrane. The enzyme catalyses a ubiquinone + NADH + 5 H(+)(in) = a ubiquinol + NAD(+) + 4 H(+)(out). Functionally, core subunit of the mitochondrial membrane respiratory chain NADH dehydrogenase (Complex I) which catalyzes electron transfer from NADH through the respiratory chain, using ubiquinone as an electron acceptor. Essential for the catalytic activity of complex I. The protein is NADH-ubiquinone oxidoreductase chain 3 of Neotoma lepida (Desert woodrat).